The sequence spans 428 residues: Tol-Pal system protein TolB (428 aa).

The N-terminal stretch at Met1 to Ala24 is a signal peptide.

It belongs to the TolB family. The Tol-Pal system is composed of five core proteins: the inner membrane proteins TolA, TolQ and TolR, the periplasmic protein TolB and the outer membrane protein Pal. They form a network linking the inner and outer membranes and the peptidoglycan layer.

Its subcellular location is the periplasm. Functionally, part of the Tol-Pal system, which plays a role in outer membrane invagination during cell division and is important for maintaining outer membrane integrity. This Chromobacterium violaceum (strain ATCC 12472 / DSM 30191 / JCM 1249 / CCUG 213 / NBRC 12614 / NCIMB 9131 / NCTC 9757 / MK) protein is Tol-Pal system protein TolB.